Consider the following 136-residue polypeptide: Large ribosomal subunit protein uL16 (136 aa).

It belongs to the universal ribosomal protein uL16 family. As to quaternary structure, part of the 50S ribosomal subunit.

In terms of biological role, binds 23S rRNA and is also seen to make contacts with the A and possibly P site tRNAs. In Rickettsia rickettsii (strain Iowa), this protein is Large ribosomal subunit protein uL16.